Here is a 224-residue protein sequence, read N- to C-terminus: MQNQVESLSLMPREKLLRFGAPALTDEELLAIFLRTGIKGCSVMQLSRHVLQHFHSLRGLMSATQTEFCQLKGLGITQFIQLQACTEMSKRYLQEELKLTQAFKNSENVRFYLQATLENKEREIFQVLFLDNQHRLIKQEEMFLGTINCTTIHPREIIKSALFCNAAALILAHNHPSGNPEPSASDKMVTTKIQAAAELVEIRILDHFVIGKGCYYSFAENRLL.

In terms of domain architecture, MPN spans 102–224 (AFKNSENVRF…YYSFAENRLL (123 aa)). His-173, His-175, and Asp-186 together coordinate Zn(2+). Residues 173 to 186 (HNHPSGNPEPSASD) carry the JAMM motif motif.

Belongs to the UPF0758 family.

This Pasteurella multocida (strain Pm70) protein is UPF0758 protein PM1152.